The chain runs to 375 residues: Nucleolysin TIAR (375 aa).

RRM domains are found at residues 9-85 (RTLY…WATT) and 97-175 (FHVF…WATR). Residue Lys122 is modified to N6-acetyllysine. Position 201 is a phosphoserine (Ser201). Residues 205 to 277 (CTVYCGGIAS…HVVKCYWGKE (73 aa)) enclose the RRM 3 domain. The disordered stretch occupies residues 345 to 375 (FGAQPPQGQAPPPVIPPPNQAGYGMASYQTQ). Pro residues predominate over residues 352–363 (GQAPPPVIPPPN).

In terms of assembly, interacts with FASTK. In terms of processing, phosphorylated by MAPK14 following DNA damage, releasing TIAR from GADD45A mRNA. In terms of tissue distribution, expressed in brain, heart, kidney, lung and skeletal muscle.

The protein resides in the nucleus. The protein localises to the cytoplasm. Its subcellular location is the cytolytic granule. It is found in the stress granule. RNA-binding protein involved in alternative pre-RNA splicing and in cytoplasmic stress granules formation. Shows a preference for uridine-rich RNAs. Activates splicing of alternative exons with weak 5' splice sites followed by a U-rich stretch on its own pre-mRNA and on TIA1 mRNA. Promotes the inclusion of TIA1 exon 5 to give rise to the long isoform (isoform a) of TIA1. Acts downstream of the stress-induced phosphorylation of EIF2S1/EIF2A to promote the recruitment of untranslated mRNAs to cytoplasmic stress granules (SG). Possesses nucleolytic activity against cytotoxic lymphocyte target cells. May be involved in apoptosis. This is Nucleolysin TIAR (TIAL1) from Homo sapiens (Human).